We begin with the raw amino-acid sequence, 66 residues long: U1-theraphotoxin-Cg1d 2 (66 aa).

The N-terminal stretch at 1–21 is a signal peptide; the sequence is MKMSALFPIFGLPLLFCNSFA. Positions 22 to 29 are excised as a propeptide; that stretch reads AELKATGR. Intrachain disulfides connect Cys-31–Cys-46, Cys-38–Cys-51, and Cys-45–Cys-58. Pro-63 bears the Proline amide mark.

The protein belongs to the neurotoxin 10 (Hwtx-1) family. 46 (Jztx-7/10/12) subfamily. Expressed by the venom gland.

The protein resides in the secreted. Functionally, probable ion channel inhibitor. This is U1-theraphotoxin-Cg1d 2 from Chilobrachys guangxiensis (Chinese earth tiger tarantula).